Consider the following 297-residue polypeptide: N-acetylneuraminate lyase (297 aa).

Residues S47 and T48 each coordinate aceneuramate. Y137 serves as the catalytic Proton donor. The active-site Schiff-base intermediate with substrate is K165. Aceneuramate is bound by residues T167, G189, D191, E192, and S208.

Belongs to the DapA family. NanA subfamily. In terms of assembly, homotetramer.

The protein resides in the cytoplasm. It catalyses the reaction aceneuramate = aldehydo-N-acetyl-D-mannosamine + pyruvate. The protein operates within amino-sugar metabolism; N-acetylneuraminate degradation; D-fructose 6-phosphate from N-acetylneuraminate: step 1/5. Functionally, catalyzes the reversible aldol cleavage of N-acetylneuraminic acid (sialic acid; Neu5Ac) to form pyruvate and N-acetylmannosamine (ManNAc) via a Schiff base intermediate. This chain is N-acetylneuraminate lyase, found in Escherichia coli O139:H28 (strain E24377A / ETEC).